Consider the following 571-residue polypeptide: La-related protein 7 (571 aa).

M1 carries the post-translational modification N-acetylmethionine. The segment covering 1–17 has biased composition (basic and acidic residues); it reads METENQKTMEESTEKRK. 2 disordered regions span residues 1–25 and 181–366; these read METENQKTMEESTEKRKEEKKKRSR and LNNP…ERHK. An HTH La-type RNA-binding domain is found at 23–117; sequence RSRVKQVLAD…KPLGERPKDE (95 aa). Residues 120–198 enclose the RRM domain; that stretch reads RTVYVELLPK…PRKPGIFPKT (79 aa). Basic residues predominate over residues 214 to 223; the sequence is KKKKKKKGRI. Residue K232 forms a Glycyl lysine isopeptide (Lys-Gly) (interchain with G-Cter in SUMO2) linkage. Phosphothreonine is present on T252. Residues S254 and S257 each carry the phosphoserine modification. At T261 the chain carries Phosphothreonine. Positions 287-296 are enriched in basic and acidic residues; the sequence is KAGKRERSSA. 3 positions are modified to phosphoserine: S294, S295, and S335. T336 carries the post-translational modification Phosphothreonine. Over residues 342–351 the composition is skewed to basic and acidic residues; it reads PGDRKGDSLS. S349 bears the Phosphoserine mark. Positions 352-365 are enriched in basic residues; the sequence is KGKRKHKKKHKERH. Residue K408 forms a Glycyl lysine isopeptide (Lys-Gly) (interchain with G-Cter in SUMO2) linkage. The segment at 411–432 is disordered; sequence SEMETESKAPPGSGQQCSTQEK. The segment covering 423–432 has biased composition (polar residues); sequence SGQQCSTQEK. Positions 439–552 constitute a xRRM domain; it reads QFVTGVIVKI…TEKLITKAEK (114 aa).

The protein belongs to the LARP7 family. In terms of assembly, core component of the 7SK RNP complex, at least composed of 7SK RNA, LARP7, MEPCE, HEXIM1 (or HEXIM2) and P-TEFb (composed of CDK9 and CCNT1/cyclin-T1). Interacts with METTL16. Interacts with RBM7; upon genotoxic stress this interaction is enhanced, triggering the release of inactive P-TEFb complex from the core, yielding to P-TEFb complex activation. Associates with box C/D small nucleolar ribonucleoprotein (snoRNP) complexes.

Its subcellular location is the nucleus. The protein localises to the nucleoplasm. Functionally, RNA-binding protein that specifically binds distinct small nuclear RNA (snRNAs) and regulates their processing and function. Specifically binds the 7SK snRNA (7SK RNA) and acts as a core component of the 7SK ribonucleoprotein (RNP) complex, thereby acting as a negative regulator of transcription elongation by RNA polymerase II. The 7SK RNP complex sequesters the positive transcription elongation factor b (P-TEFb) in a large inactive 7SK RNP complex preventing RNA polymerase II phosphorylation and subsequent transcriptional elongation. The 7SK RNP complex also promotes snRNA gene transcription by RNA polymerase II via interaction with the little elongation complex (LEC). LARP7 specifically binds to the highly conserved 3'-terminal U-rich stretch of 7SK RNA; on stimulation, remains associated with 7SK RNA, whereas P-TEFb is released from the complex. LARP7 also acts as a regulator of mRNA splicing fidelity by promoting U6 snRNA processing. Specifically binds U6 snRNAs and associates with a subset of box C/D RNP complexes: promotes U6 snRNA 2'-O-methylation by facilitating U6 snRNA loading into box C/D RNP complexes. U6 snRNA 2'-O-methylation is required for mRNA splicing fidelity. Binds U6 snRNAs with a 5'-CAGGG-3' sequence motif. U6 snRNA processing is required for spermatogenesis. This Rattus norvegicus (Rat) protein is La-related protein 7.